The chain runs to 141 residues: VLTDEDKARVRASWVPVGKNAELYGSETLTRMFAAHPTTKTYFPHFDLSPGSNNLRAHGKKVIDAITEAVNNLDDVAGTLSKLSDLHAQKLRVDPVNFKLLAHCLLVTIAAHNGGVLKPEVIVSLDKFLGDLSKDLVSKYR.

Residues 1-141 (VLTDEDKARV…LSKDLVSKYR (141 aa)) form the Globin domain. His-58 serves as a coordination point for O2. Heme b is bound at residue His-87.

It belongs to the globin family. Heterotetramer of two alpha chains and two beta chains. As to expression, red blood cells.

Involved in oxygen transport from the lung to the various peripheral tissues. This chain is Hemoglobin subunit alpha-1, found in Naja naja (Indian cobra).